Here is a 445-residue protein sequence, read N- to C-terminus: GTPase Der (445 aa).

EngA-type G domains are found at residues 3–167 and 180–353; these read PVIA…YAGQ and IKIA…AAAM. GTP contacts are provided by residues 9–16, 56–60, 119–122, 186–193, 233–237, and 298–301; these read GRPNVGKS, DTGGF, NKAE, DTAGL, and NKWD. The 85-residue stretch at 354–438 folds into the KH-like domain; that stretch reads AKLPTPKLTR…PLRIEFRSSN (85 aa).

This sequence belongs to the TRAFAC class TrmE-Era-EngA-EngB-Septin-like GTPase superfamily. EngA (Der) GTPase family. In terms of assembly, associates with the 50S ribosomal subunit.

Functionally, GTPase that plays an essential role in the late steps of ribosome biogenesis. The chain is GTPase Der from Burkholderia cenocepacia (strain HI2424).